A 117-amino-acid polypeptide reads, in one-letter code: Putative pterin-4-alpha-carbinolamine dehydratase (117 aa).

This sequence belongs to the pterin-4-alpha-carbinolamine dehydratase family.

It carries out the reaction (4aS,6R)-4a-hydroxy-L-erythro-5,6,7,8-tetrahydrobiopterin = (6R)-L-erythro-6,7-dihydrobiopterin + H2O. In Azoarcus sp. (strain BH72), this protein is Putative pterin-4-alpha-carbinolamine dehydratase.